Consider the following 622-residue polypeptide: Pyranose 2-oxidase (622 aa).

The N-terminal stretch at 1-28 (MSASSSDPFHSFAKTSFTSKAAKRATAH) is a signal peptide. Residues 29-37 (SLPPLPGPG) constitute a propeptide that is removed on maturation. Histidine 167 is subject to Tele-8alpha-FAD histidine. Substrate contacts are provided by glutamine 449 and histidine 451. Histidine 546 functions as the Proton acceptor in the catalytic mechanism. Asparagine 591 is an active-site residue.

Belongs to the GMC oxidoreductase family. In terms of assembly, homotetramer. FAD is required as a cofactor. Post-translationally, not glycosylated.

The protein localises to the periplasm. It carries out the reaction D-glucose + O2 = 2-dehydro-D-glucose + H2O2. Functionally, catalyzes the oxidation of various aldopyranoses and disaccharides on carbon-2 to the corresponding 2-keto sugars concomitant with the reduction of O(2) to H(2)O(2). Plays an important role in lignin degradation of wood rot fungi by supplying the essential cosubstrate H(2)O(2) for the ligninolytic peroxidases, lignin peroxidase and manganese-dependent peroxidase. The preferred substrate is D-glucose which is converted to 2-dehydro-D-glucose, an intermediate of a secondary metabolic pathway leading to the antibiotic cortalcerone. Also acts on D-xylose, together with D-glucose the major sugars derived from wood, on L-sorbose, D-galactose and 1,5-anhydroglucitol, a diagnostic marker of diabetes mellitus. The sequence is that of Pyranose 2-oxidase (p2ox) from Phlebiopsis gigantea (White-rot fungus).